Consider the following 412-residue polypeptide: Elongation factor 1-gamma 2 (412 aa).

Ser-2 is modified (N-acetylserine). A GST N-terminal domain is found at 2–77 (SQGTLYINRS…YLANQVADEK (76 aa)). A GST C-terminal domain is found at 86 to 217 (DVIEKSQILR…AEKALTYTPP (132 aa)). Residues 216–253 (PPKKQKAEKPKAEKSKAEKKKDEAKPADDAAPAKKPKH) form a disordered region. Residues 220 to 247 (QKAEKPKAEKSKAEKKKDEAKPADDAAP) show a composition bias toward basic and acidic residues. In terms of domain architecture, EF-1-gamma C-terminal spans 251-412 (PKHPLEALGK…KEIVDGKVLK (162 aa)).

In terms of assembly, the eukaryotic elongation factor 1 complex (eEF1) is probably a heterohexamer. Two trimeric complexes, each composed of eEF1A (TEF1 or TEF2), eEF1Balpha (EFB1) and eEF1Bgamma (CAM1 or TEF4), are probably dimerized via the eF1Bgamma subunits. The eEF1B subcomplex with the GEF activity is formed of eEF1Balpha and eEF1Bgamma. TEF4 interacts with EFB1.

Its subcellular location is the cytoplasm. Its pathway is protein biosynthesis; polypeptide chain elongation. In terms of biological role, subunit of the eukaryotic elongation factor 1 complex (eEF1). Probably plays a role in anchoring the complex to other cellular components. The protein is Elongation factor 1-gamma 2 (TEF4) of Saccharomyces cerevisiae (strain ATCC 204508 / S288c) (Baker's yeast).